A 355-amino-acid polypeptide reads, in one-letter code: Elongation factor Ts, mitochondrial (355 aa).

Residues 1-46 constitute a mitochondrion transit peptide; that stretch reads MIRSLNFALRNCNKNILINSNKITINNGLLLKKNNFCTQSTSEVKV.

The protein belongs to the EF-Ts family.

Its subcellular location is the mitochondrion. Its function is as follows. Associates with the EF-Tu.GDP complex and induces the exchange of GDP to GTP. It remains bound to the aminoacyl-tRNA.EF-Tu.GTP complex up to the GTP hydrolysis stage on the ribosome. The polypeptide is Elongation factor Ts, mitochondrial (tsfm) (Dictyostelium discoideum (Social amoeba)).